Reading from the N-terminus, the 134-residue chain is MLRKAIADIQAKYVRKDVPELRSGDSVRVHTKIKEGDKERIQVFEGVVIAYRRGTPGSSMFTVRKMSYGVGVERMFPVHSPRIDRIEVTGHGEVRRSRLYYLRGLQGKAARLHQEEGPSSAAPASTPPAAAPQA.

The tract at residues 110 to 134 is disordered; it reads ARLHQEEGPSSAAPASTPPAAAPQA. Positions 125–134 are enriched in pro residues; that stretch reads STPPAAAPQA.

The protein belongs to the bacterial ribosomal protein bL19 family.

This protein is located at the 30S-50S ribosomal subunit interface and may play a role in the structure and function of the aminoacyl-tRNA binding site. This chain is Large ribosomal subunit protein bL19, found in Anaeromyxobacter sp. (strain Fw109-5).